Consider the following 42-residue polypeptide: uncharacterized protein (42 aa).

It is found in the plastid. The protein resides in the chloroplast. This is an uncharacterized protein from Diacronema lutheri (Unicellular marine alga).